The sequence spans 96 residues: Small ribosomal subunit protein bS6 (96 aa).

This sequence belongs to the bacterial ribosomal protein bS6 family.

In terms of biological role, binds together with bS18 to 16S ribosomal RNA. The sequence is that of Small ribosomal subunit protein bS6 from Bacillus thuringiensis subsp. konkukian (strain 97-27).